We begin with the raw amino-acid sequence, 230 residues long: Voltage-gated hydrogen channel 1 (230 aa).

Over 1–58 the chain is Cytoplasmic; the sequence is MAGCLRHFTSVGDDTKKKAWKEEDVEVAHEEEPKNTPHPFIASYSFRGALKWLFSSHK. A helical membrane pass occupies residues 59–79; the sequence is FQIVIICLVILDALFVLVEVL. At 80–96 the chain is on the extracellular side; that stretch reads LDLELLAEKVDHIIPEI. The chain crosses the membrane as a helical span at residues 97 to 119; the sequence is FHYLSISVLSFFILEIAGKLYAF. Topologically, residues 120–127 are cytoplasmic; sequence RLEFFHHK. The helical transmembrane segment at 128–148 threads the bilayer; sequence FEVFDAAIVVISFIIDIVYIS. The Extracellular portion of the chain corresponds to 149–155; sequence REDIFNA. A helical membrane pass occupies residues 156–176; sequence VGLLILLRLWRVARIVNGIIV. Residues 177–226 are a coiled coil; the sequence is SVKTQAEDKIHRLKENQESLLEKVAHLEQQCAQQEQEIVRLQTLLQQHNV. The Cytoplasmic segment spans residues 177-230; the sequence is SVKTQAEDKIHRLKENQESLLEKVAHLEQQCAQQEQEIVRLQTLLQQHNVFPAS.

The protein belongs to the hydrogen channel family. As to quaternary structure, homodimer.

Its subcellular location is the membrane. The protein resides in the cell membrane. Its function is as follows. Mediates the voltage-dependent proton permeability of excitable membranes. Forms a proton-selective channel through which protons may pass in accordance with their electrochemical gradient. This is Voltage-gated hydrogen channel 1 (hvcn1) from Xenopus tropicalis (Western clawed frog).